Reading from the N-terminus, the 932-residue chain is Isoleucine--tRNA ligase (932 aa).

The short motif at 57 to 67 (PYANGDIHMGH) is the 'HIGH' region element. Glutamate 556 lines the L-isoleucyl-5'-AMP pocket. The short motif at 597 to 601 (KMSKS) is the 'KMSKS' region element. Lysine 600 lines the ATP pocket. 4 residues coordinate Zn(2+): cysteine 891, cysteine 894, cysteine 911, and cysteine 914.

The protein belongs to the class-I aminoacyl-tRNA synthetase family. IleS type 1 subfamily. In terms of assembly, monomer. Zn(2+) serves as cofactor.

The protein localises to the cytoplasm. It carries out the reaction tRNA(Ile) + L-isoleucine + ATP = L-isoleucyl-tRNA(Ile) + AMP + diphosphate. In terms of biological role, catalyzes the attachment of isoleucine to tRNA(Ile). As IleRS can inadvertently accommodate and process structurally similar amino acids such as valine, to avoid such errors it has two additional distinct tRNA(Ile)-dependent editing activities. One activity is designated as 'pretransfer' editing and involves the hydrolysis of activated Val-AMP. The other activity is designated 'posttransfer' editing and involves deacylation of mischarged Val-tRNA(Ile). The polypeptide is Isoleucine--tRNA ligase (Lactiplantibacillus plantarum (strain ATCC BAA-793 / NCIMB 8826 / WCFS1) (Lactobacillus plantarum)).